The chain runs to 87 residues: Small ribosomal subunit protein bS18 (87 aa).

Belongs to the bacterial ribosomal protein bS18 family. As to quaternary structure, part of the 30S ribosomal subunit. Forms a tight heterodimer with protein bS6.

In terms of biological role, binds as a heterodimer with protein bS6 to the central domain of the 16S rRNA, where it helps stabilize the platform of the 30S subunit. This is Small ribosomal subunit protein bS18 from Campylobacter hominis (strain ATCC BAA-381 / DSM 21671 / CCUG 45161 / LMG 19568 / NCTC 13146 / CH001A).